The sequence spans 358 residues: tRNA N6-adenosine threonylcarbamoyltransferase (358 aa).

Fe cation contacts are provided by His-111 and His-115. Substrate is bound by residues 146–150, Asp-179, Gly-192, and Asn-294; that span reads LVSGG. Asp-322 is a binding site for Fe cation.

The protein belongs to the KAE1 / TsaD family. It depends on Fe(2+) as a cofactor.

The protein resides in the cytoplasm. It carries out the reaction L-threonylcarbamoyladenylate + adenosine(37) in tRNA = N(6)-L-threonylcarbamoyladenosine(37) in tRNA + AMP + H(+). In terms of biological role, required for the formation of a threonylcarbamoyl group on adenosine at position 37 (t(6)A37) in tRNAs that read codons beginning with adenine. Is involved in the transfer of the threonylcarbamoyl moiety of threonylcarbamoyl-AMP (TC-AMP) to the N6 group of A37, together with TsaE and TsaB. TsaD likely plays a direct catalytic role in this reaction. This is tRNA N6-adenosine threonylcarbamoyltransferase from Helicobacter hepaticus (strain ATCC 51449 / 3B1).